Here is a 70-residue protein sequence, read N- to C-terminus: Large ribosomal subunit protein eL43 (70 aa).

Zn(2+) is bound by residues cysteine 36, cysteine 39, cysteine 55, and cysteine 58. Residues 36-58 form a C4-type zinc finger; it reads CPYCKTTGKVIRLASGIWYCKKC.

This sequence belongs to the eukaryotic ribosomal protein eL43 family. Putative zinc-binding subfamily. Part of the 50S ribosomal subunit. It depends on Zn(2+) as a cofactor.

Its function is as follows. Binds to the 23S rRNA. The polypeptide is Large ribosomal subunit protein eL43 (Saccharolobus solfataricus (strain ATCC 35092 / DSM 1617 / JCM 11322 / P2) (Sulfolobus solfataricus)).